The chain runs to 201 residues: Small ribosomal subunit protein uS4c (201 aa).

The region spanning 90–153 (MRLDNVIFRL…SSQNLVKRYL (64 aa)) is the S4 RNA-binding domain.

The protein belongs to the universal ribosomal protein uS4 family. As to quaternary structure, part of the 30S ribosomal subunit. Contacts protein S5. The interaction surface between S4 and S5 is involved in control of translational fidelity.

The protein localises to the plastid. Its subcellular location is the chloroplast. In terms of biological role, one of the primary rRNA binding proteins, it binds directly to 16S rRNA where it nucleates assembly of the body of the 30S subunit. Functionally, with S5 and S12 plays an important role in translational accuracy. This is Small ribosomal subunit protein uS4c (rps4) from Gracilaria tenuistipitata var. liui (Red alga).